The sequence spans 1401 residues: DNA-directed RNA polymerase subunit beta' (1401 aa).

Positions 70, 72, 85, and 88 each coordinate Zn(2+). Positions 460, 462, and 464 each coordinate Mg(2+). The Zn(2+) site is built by Cys-808, Cys-882, Cys-889, and Cys-892.

Belongs to the RNA polymerase beta' chain family. As to quaternary structure, the RNAP catalytic core consists of 2 alpha, 1 beta, 1 beta' and 1 omega subunit. When a sigma factor is associated with the core the holoenzyme is formed, which can initiate transcription. The cofactor is Mg(2+). Zn(2+) serves as cofactor.

The enzyme catalyses RNA(n) + a ribonucleoside 5'-triphosphate = RNA(n+1) + diphosphate. In terms of biological role, DNA-dependent RNA polymerase catalyzes the transcription of DNA into RNA using the four ribonucleoside triphosphates as substrates. The protein is DNA-directed RNA polymerase subunit beta' of Legionella pneumophila (strain Lens).